A 388-amino-acid chain; its full sequence is Chorismate synthase (388 aa).

Arginine 39 and arginine 45 together coordinate NADP(+). FMN contacts are provided by residues 132–134 (RSS), 251–252 (NA), glycine 296, 311–315 (KPIPT), and arginine 337.

This sequence belongs to the chorismate synthase family. As to quaternary structure, homotetramer. The cofactor is FMNH2.

The catalysed reaction is 5-O-(1-carboxyvinyl)-3-phosphoshikimate = chorismate + phosphate. It participates in metabolic intermediate biosynthesis; chorismate biosynthesis; chorismate from D-erythrose 4-phosphate and phosphoenolpyruvate: step 7/7. Functionally, catalyzes the anti-1,4-elimination of the C-3 phosphate and the C-6 proR hydrogen from 5-enolpyruvylshikimate-3-phosphate (EPSP) to yield chorismate, which is the branch point compound that serves as the starting substrate for the three terminal pathways of aromatic amino acid biosynthesis. This reaction introduces a second double bond into the aromatic ring system. This chain is Chorismate synthase, found in Staphylococcus aureus (strain COL).